A 903-amino-acid polypeptide reads, in one-letter code: DNA gyrase subunit A (903 aa).

The Topo IIA-type catalytic domain occupies leucine 36–leucine 499. Tyrosine 124 functions as the O-(5'-phospho-DNA)-tyrosine intermediate in the catalytic mechanism. A GyrA-box motif is present at residues glutamine 526–glycine 532. Positions valine 881 to glutamate 895 are enriched in basic and acidic residues. Residues valine 881–glutamate 903 form a disordered region.

The protein belongs to the type II topoisomerase GyrA/ParC subunit family. Heterotetramer, composed of two GyrA and two GyrB chains. In the heterotetramer, GyrA contains the active site tyrosine that forms a transient covalent intermediate with DNA, while GyrB binds cofactors and catalyzes ATP hydrolysis.

It is found in the cytoplasm. The catalysed reaction is ATP-dependent breakage, passage and rejoining of double-stranded DNA.. A type II topoisomerase that negatively supercoils closed circular double-stranded (ds) DNA in an ATP-dependent manner to modulate DNA topology and maintain chromosomes in an underwound state. Negative supercoiling favors strand separation, and DNA replication, transcription, recombination and repair, all of which involve strand separation. Also able to catalyze the interconversion of other topological isomers of dsDNA rings, including catenanes and knotted rings. Type II topoisomerases break and join 2 DNA strands simultaneously in an ATP-dependent manner. The chain is DNA gyrase subunit A from Fibrobacter succinogenes (strain ATCC 19169 / S85).